Here is a 402-residue protein sequence, read N- to C-terminus: Tryptophan synthase beta chain (402 aa).

Residue lysine 91 is modified to N6-(pyridoxal phosphate)lysine.

It belongs to the TrpB family. In terms of assembly, tetramer of two alpha and two beta chains. It depends on pyridoxal 5'-phosphate as a cofactor.

It carries out the reaction (1S,2R)-1-C-(indol-3-yl)glycerol 3-phosphate + L-serine = D-glyceraldehyde 3-phosphate + L-tryptophan + H2O. It participates in amino-acid biosynthesis; L-tryptophan biosynthesis; L-tryptophan from chorismate: step 5/5. Functionally, the beta subunit is responsible for the synthesis of L-tryptophan from indole and L-serine. The sequence is that of Tryptophan synthase beta chain from Streptococcus thermophilus (strain CNRZ 1066).